A 294-amino-acid polypeptide reads, in one-letter code: tRNA dimethylallyltransferase (294 aa).

10–17 provides a ligand contact to ATP; that stretch reads GPTAVGKT. 12–17 is a binding site for substrate; it reads TAVGKT. The interaction with substrate tRNA stretch occupies residues 35 to 38; that stretch reads DSQQ.

It belongs to the IPP transferase family. Monomer. It depends on Mg(2+) as a cofactor.

The catalysed reaction is adenosine(37) in tRNA + dimethylallyl diphosphate = N(6)-dimethylallyladenosine(37) in tRNA + diphosphate. Its function is as follows. Catalyzes the transfer of a dimethylallyl group onto the adenine at position 37 in tRNAs that read codons beginning with uridine, leading to the formation of N6-(dimethylallyl)adenosine (i(6)A). The polypeptide is tRNA dimethylallyltransferase (Streptococcus pneumoniae serotype 19F (strain G54)).